Consider the following 69-residue polypeptide: Cytochrome b-c1 complex subunit 6 (69 aa).

2 cysteine pairs are disulfide-bonded: Cys-17-Cys-59 and Cys-31-Cys-45.

This sequence belongs to the UQCRH/QCR6 family. Component of the ubiquinol-cytochrome c oxidoreductase (cytochrome b-c1 complex, complex III, CIII), a multisubunit enzyme composed of 3 respiratory subunits cytochrome b, cytochrome c1 and Rieske protein, 2 core protein subunits, and additional low-molecular weight protein subunits. The complex exists as an obligatory dimer and forms supercomplexes (SCs) in the inner mitochondrial membrane with cytochrome c oxidase (complex IV, CIV).

The protein resides in the mitochondrion inner membrane. Component of the ubiquinol-cytochrome c oxidoreductase, a multisubunit transmembrane complex that is part of the mitochondrial electron transport chain which drives oxidative phosphorylation. The respiratory chain contains 3 multisubunit complexes succinate dehydrogenase (complex II, CII), ubiquinol-cytochrome c oxidoreductase (cytochrome b-c1 complex, complex III, CIII) and cytochrome c oxidase (complex IV, CIV), that cooperate to transfer electrons derived from NADH and succinate to molecular oxygen, creating an electrochemical gradient over the inner membrane that drives transmembrane transport and the ATP synthase. The cytochrome b-c1 complex catalyzes electron transfer from ubiquinol to cytochrome c, linking this redox reaction to translocation of protons across the mitochondrial inner membrane, with protons being carried across the membrane as hydrogens on the quinol. In the process called Q cycle, 2 protons are consumed from the matrix, 4 protons are released into the intermembrane space and 2 electrons are passed to cytochrome c. The polypeptide is Cytochrome b-c1 complex subunit 6 (Solanum tuberosum (Potato)).